The chain runs to 294 residues: MSDPNLNDAVEPEAGASESAKDELDIVEAADSVDPDQAEAADLAAGEPAERAAVNVAGDDSDEDDAAAEEAVEADDESADEEEAEPAAPVDPVAALRDELRTLPGEWYVIHTYAGYEKRVKANLEQRAVSLNVEEFIYQAEVPEEEIVQIKNGERKNVRQNKLPGYVLVRMDLTNESWGVVRNTPGVTGFVGNAYDPYPLTLDEIVKMLAPEAEEKAAREAAEAEGKPAPARKVEVQVLDFEVGDSVTVTDGPFATLQATINEINADSKKVKGLVEIFGRETPVELSFDQIQKN.

Positions 1–91 (MSDPNLNDAV…EEAEPAAPVD (91 aa)) are disordered. Acidic residues predominate over residues 25-39 (DIVEAADSVDPDQAE). A compositionally biased stretch (low complexity) spans 40–53 (AADLAAGEPAERAA). Acidic residues predominate over residues 59–85 (DDSDEDDAAAEEAVEADDESADEEEAE).

The protein belongs to the NusG family.

Participates in transcription elongation, termination and antitermination. This is Transcription termination/antitermination protein NusG from Streptomyces griseus.